The following is a 201-amino-acid chain: Charged multivesicular body protein 6 (201 aa).

Glycine 2 carries the N-myristoyl glycine lipid modification. Residues 10 to 145 are a coiled coil; the sequence is QSRVTEQDKA…YQRQIDELLA (136 aa). Serine 119 is modified (phosphoserine). Phosphothreonine is present on threonine 130. Positions 168-179 match the Type-2 MIT-interacting motif motif; it reads IELPEVPSEPLP. The segment at 170 to 181 is interaction with VPS4A; sequence LPEVPSEPLPEK.

Belongs to the SNF7 family. Probable core component of the endosomal sorting required for transport complex III (ESCRT-III). ESCRT-III components are thought to multimerize to form a flat lattice on the perimeter membrane of the endosome. Several assembly forms of ESCRT-III may exist that interact and act sequentially. Interacts with VPS4A; the interaction is direct. Interacts with VPS4B; the interaction is direct. Interacts with CHMP4A, CHMP4B and CHMP4C. Interacts with SNF8, VPS25 and VPS36. In terms of processing, ISGylated in a CHMP5-dependent manner. Isgylation weakens its interaction with VPS4A. In terms of tissue distribution, ubiquitously expressed.

It is found in the endomembrane system. It localises to the endosome membrane. The protein resides in the late endosome membrane. Its subcellular location is the membrane. Its function is as follows. Probable core component of the endosomal sorting required for transport complex III (ESCRT-III) which is involved in multivesicular bodies (MVBs) formation and sorting of endosomal cargo proteins into MVBs. MVBs contain intraluminal vesicles (ILVs) that are generated by invagination and scission from the limiting membrane of the endosome and mostly are delivered to lysosomes enabling degradation of membrane proteins, such as stimulated growth factor receptors, lysosomal enzymes and lipids. The MVB pathway appears to require the sequential function of ESCRT-O, -I,-II and -III complexes. ESCRT-III proteins mostly dissociate from the invaginating membrane before the ILV is released. The ESCRT machinery also functions in topologically equivalent membrane fission events, such as the terminal stages of cytokinesis and the budding of enveloped viruses (HIV-1 and other lentiviruses). ESCRT-III proteins are believed to mediate the necessary vesicle extrusion and/or membrane fission activities, possibly in conjunction with the AAA ATPase VPS4. In the ESCRT-III complex, it probably serves as an acceptor for the ESCRT-II complex on endosomal membranes. This Homo sapiens (Human) protein is Charged multivesicular body protein 6 (CHMP6).